Reading from the N-terminus, the 227-residue chain is ATP-dependent dethiobiotin synthetase BioD (227 aa).

Residue 13 to 18 coordinates ATP; the sequence is DIGKTY. T17 lines the Mg(2+) pocket. Residue K38 is part of the active site. Position 42 (S42) interacts with substrate. ATP-binding positions include D55, 116–119, and 179–180; these read EGSG and NN. Mg(2+) is bound by residues D55 and E116.

It belongs to the dethiobiotin synthetase family. In terms of assembly, homodimer. Mg(2+) serves as cofactor.

It localises to the cytoplasm. It catalyses the reaction (7R,8S)-7,8-diammoniononanoate + CO2 + ATP = (4R,5S)-dethiobiotin + ADP + phosphate + 3 H(+). The protein operates within cofactor biosynthesis; biotin biosynthesis; biotin from 7,8-diaminononanoate: step 1/2. Its function is as follows. Catalyzes a mechanistically unusual reaction, the ATP-dependent insertion of CO2 between the N7 and N8 nitrogen atoms of 7,8-diaminopelargonic acid (DAPA, also called 7,8-diammoniononanoate) to form a ureido ring. This is ATP-dependent dethiobiotin synthetase BioD from Clostridium botulinum (strain 657 / Type Ba4).